A 995-amino-acid chain; its full sequence is Meckelin (995 aa).

The first 36 residues, 1-36 (MATRGGAGVAMAVWSLLSARAVTAFLLLFLPRFLQA), serve as a signal peptide directing secretion. Residues 37–280 (QTFSFPFQQP…FQFIFENTAG (244 aa)) are cysteine-rich. At 37–519 (QTFSFPFQQP…SVTYEMDHGE (483 aa)) the chain is on the extracellular side. 11 disulfides stabilise this stretch: C49–C62, C65–C78, C80–C97, C100–C114, C117–C127, C129–C150, C153–C170, C173–C184, C186–C197, C237–C246, and C253–C268. N-linked (GlcNAc...) asparagine glycosylation occurs at N141. N-linked (GlcNAc...) asparagine glycosylation is present at N179. N242 is a glycosylation site (N-linked (GlcNAc...) asparagine). The N-linked (GlcNAc...) asparagine glycan is linked to N318. A disulfide bridge connects residues C357 and C378. A helical transmembrane segment spans residues 520–548 (AHVQTDIALGVLGGLAVLASLLKTAGWKR). At 549 to 558 (RIGSPMIDLQ) the chain is on the cytoplasmic side. Residues 559–590 (TVVKFLVYYAGDLANVFFIITVGTGLYWLIFF) form a helical membrane-spanning segment. At 591 to 603 (KAQKSVSVLLPMP) the chain is on the extracellular side. A helical transmembrane segment spans residues 604–631 (IQEERFVTYVGCAFALKALQFLHKLISQ). Over 632–670 (ITIDVFFIDWERPKGKVLKAVEGEGGVRSATVPVSIWRT) the chain is Cytoplasmic. An intramembrane region (helical) is located at residues 671–679 (YFVANEWNE). The discontinuously helical transmembrane segment at 671 to 701 (YFVANEWNEIQTVRKINSLFQVLTVLFFLEV) threads the bilayer. Residues 680–688 (IQTVRKINS) lie within the membrane without spanning it. An intramembrane region (helical) is located at residues 689–701 (LFQVLTVLFFLEV). The Extracellular portion of the chain corresponds to 702-731 (VGFKNLALMDSSSSLSRNPPSYIAPYSCIL). The segment at residues 732–757 (RYAVSAALWLAIGIIQVVFFAVFYER) is an intramembrane region (helical). The discontinuously helical transmembrane segment at 732–771 (RYAVSAALWLAIGIIQVVFFAVFYERFIEDKIRQFVDLCS) threads the bilayer. Residues 758-762 (FIEDK) lie within the membrane without spanning it. Positions 763 to 771 (IRQFVDLCS) form an intramembrane region, helical. Over 772–926 (MSNISVFLLS…SIFYNDEGYS (155 aa)) the chain is Cytoplasmic. Residues 828–917 (GQTFEIAISN…MEFMEPMEKS (90 aa)) are a coiled coil. The helical intramembrane region spans 927–929 (FSS). Residues 927-952 (FSSVLYYGNEATLLIFDLLFFCVVDL) traverse the membrane as a discontinuously helical segment. An intramembrane segment occupies 930 to 936 (VLYYGNE). The helical intramembrane region spans 937-952 (ATLLIFDLLFFCVVDL). Topologically, residues 953 to 957 (ACQNF) are extracellular. The chain crosses the membrane as a helical span at residues 958–985 (ILASFLTYLQQEIFRYIRNTVGQKNLAS). Over 986 to 995 (KTLVDQRFLI) the chain is Cytoplasmic.

In terms of assembly, homodimer. Part of the tectonic-like complex (also named B9 complex). Interacts with DNAJB9, DNAJC10 and mutated SFTPC. Interacts with SYNE2 during the early establishment of cell polarity. Interacts (via C-terminus) with FLNA. Interacts with TMEM218. Interacts with WNT5A. Interacts with ROR2. As to expression, widely expressed in adult and fetal tissues. Expressed at higher level in spinal cord.

It localises to the cell membrane. It is found in the endoplasmic reticulum membrane. The protein localises to the cell projection. Its subcellular location is the cilium. The protein resides in the cytoplasm. It localises to the cytoskeleton. It is found in the cilium basal body. Required for ciliary structure and function. Part of the tectonic-like complex which is required for tissue-specific ciliogenesis and may regulate ciliary membrane composition. Involved in centrosome migration to the apical cell surface during early ciliogenesis. Involved in the regulation of cilia length and appropriate number through the control of centrosome duplication. Is a key regulator of stereociliary bundle orientation. Required for epithelial cell branching morphology. Essential for endoplasmic reticulum-associated degradation (ERAD) of surfactant protein C (SFTPC). Involved in the negative regulation of canonical Wnt signaling, and activation of the non-canonical cascade stimulated by WNT5A. In non-canonical Wnt signaling, it may act as ROR2 coreceptor. The protein is Meckelin (TMEM67) of Homo sapiens (Human).